A 138-amino-acid chain; its full sequence is Cell division protein SepF (138 aa).

Residues 1-59 are disordered; it reads MNNKFKDFFGFGDNDSYEERDAYEEHYDEQEEMQNSNRPTNSRDSNVVSIKAGQAGSGP. Over residues 33–48 the composition is skewed to polar residues; that stretch reads MQNSNRPTNSRDSNVV.

The protein belongs to the SepF family. In terms of assembly, homodimer. Interacts with FtsZ.

It localises to the cytoplasm. Cell division protein that is part of the divisome complex and is recruited early to the Z-ring. Probably stimulates Z-ring formation, perhaps through the cross-linking of FtsZ protofilaments. Its function overlaps with FtsA. The polypeptide is Cell division protein SepF (Lactobacillus delbrueckii subsp. bulgaricus (strain ATCC 11842 / DSM 20081 / BCRC 10696 / JCM 1002 / NBRC 13953 / NCIMB 11778 / NCTC 12712 / WDCM 00102 / Lb 14)).